A 666-amino-acid polypeptide reads, in one-letter code: Nuclear distribution protein nudE homolog 1 (666 aa).

Residues 14 to 195 adopt a coiled-coil conformation; it reads EEEIAHYREK…KDQLARAIAT (182 aa). Disordered stretches follow at residues 40–64, 220–310, 369–388, and 397–666; these read EFQQ…KQQA, DDIN…SGIP, KRVT…PAPH, and DHNT…KVKK. A compositionally biased stretch (polar residues) spans 251–274; that stretch reads RSGTMSSIPVASPSTKRFSQQIPH. Low complexity-rich tracts occupy residues 275 to 287 and 372 to 383; these read SPSF…STTS and TSTTSTTSSTTT. Positions 400–410 are enriched in polar residues; it reads TTPTAQSQQFP. Composition is skewed to low complexity over residues 449–465, 473–485, and 536–554; these read PTFR…LPSR, ASGS…SGTA, and SATP…STSN. Composition is skewed to polar residues over residues 587–599 and 614–638; these read RQSL…TPTT and SSLS…SGRP.

It belongs to the nudE family. Self-associates. Interacts with PAC1.

It is found in the cytoplasm. Its subcellular location is the cytoskeleton. Functionally, required for nuclear migration. This Cryptococcus neoformans var. neoformans serotype D (strain B-3501A) (Filobasidiella neoformans) protein is Nuclear distribution protein nudE homolog 1 (NDE1).